Here is a 340-residue protein sequence, read N- to C-terminus: Solute carrier family 35 member G3 (340 aa).

The segment at 11–31 (PDFTQPSPPSTPSSLTSNHHN) is disordered. The next 9 helical transmembrane spans lie at 39-59 (TKGL…VGPF), 69-89 (LPSL…ALIL), 107-127 (FLHA…VQVV), 160-180 (AWCG…PGLG), 189-209 (LYTA…SLGL), 223-243 (TVAF…LFVL), 257-277 (CMVA…YAVT), 283-303 (LVCA…YYVL), and 307-327 (VAPS…IITA). Residues 51 to 176 (LSAGFVGPFS…STLGLIIIVG (126 aa)) form the EamA 1 domain. The EamA 2 domain maps to 223–327 (TVAFLFGLVG…VLGSIAIITA (105 aa)).

Belongs to the SLC35G solute transporter family.

The protein localises to the membrane. The chain is Solute carrier family 35 member G3 (Slc35g3) from Rattus norvegicus (Rat).